The following is a 162-amino-acid chain: Protein archease (162 aa).

Residues Asp-34, Asp-161, and Ile-162 each contribute to the Ca(2+) site.

Belongs to the archease family. In terms of assembly, component of the tRNA-splicing ligase complex.

In terms of biological role, component of the tRNA-splicing ligase complex required to facilitate the enzymatic turnover of catalytic subunit RTCB. Together with ddx1, acts by facilitating the guanylylation of RTCB, a key intermediate step in tRNA ligation. The chain is Protein archease (zbtb8os) from Danio rerio (Zebrafish).